Here is a 214-residue protein sequence, read N- to C-terminus: Putative pit accessory protein (214 aa).

It belongs to the UPF0111 family.

Its function is as follows. Could be involved in orthophosphate transport. In Rhizobium meliloti (strain 1021) (Ensifer meliloti), this protein is Putative pit accessory protein.